Here is a 467-residue protein sequence, read N- to C-terminus: Dimethylamine methyltransferase MtbB3 (467 aa).

Position 356 (O356) is a non-standard amino acid, pyrrolysine.

The protein belongs to the dimethylamine methyltransferase family.

The enzyme catalyses Co(I)-[dimethylamine-specific corrinoid protein] + dimethylamine + H(+) = methyl-Co(III)-[dimethylamine-specific corrinoid protein] + methylamine. The protein operates within one-carbon metabolism; methanogenesis from dimethylamine. Catalyzes the transfer of a methyl group from dimethylamine to the corrinoid cofactor of MtbC. The chain is Dimethylamine methyltransferase MtbB3 (mtbB3) from Methanosarcina mazei (strain ATCC BAA-159 / DSM 3647 / Goe1 / Go1 / JCM 11833 / OCM 88) (Methanosarcina frisia).